Reading from the N-terminus, the 1013-residue chain is Retinoblastoma-related protein 1 (1013 aa).

A domain A region spans residues Thr-406–Leu-607. Positions Thr-406 to Pro-858 are pocket. The interval Ile-608–Glu-727 is spacer. Residues Thr-728–Pro-858 are domain B. A phosphoserine mark is found at Ser-885 and Ser-898. The tract at residues Val-979–Ser-1013 is disordered. Positions Ala-980 to Ala-1004 are enriched in low complexity.

The protein belongs to the retinoblastoma protein (RB) family. As to quaternary structure, interacts with the begomovirus replication-associated protein (Rep), the nanovirus Clink protein, the mastrevirus RepA protein, E2FA, E2FB and E2FC. Interacts with MSI1 through its Domain A. Interacts with ATPK1/S6K1. Interacts with SCR. Interacts with HAT2. Interacts with FAMA. Interacts with MYB124 and MYB88. Component of a DREAM-like complex which modulates a variety of developmentally regulated genes and of the mitotic genes in proliferating and differentiated cells. Associates with MYB3R3 in both earlier and later stages of leaves development. Interacts with MYB3R4 only at early stages of leaves development. In terms of processing, highly phosphorylated by CDKA-1 during G1 to S phase transition. Once hyper-phosphorylated, becomes inactive and unable to interact with E2F. Ubiquitinated. Subject to proteasome-dependent degradation during sucrose starvation. As to expression, expressed in actively dividing cells. Detected in the shoot apical meristem, in young leaf primordia and in both sporophytic tissue and the megagametophyte.

The protein localises to the nucleus. Functionally, key regulator of entry into cell division. Acts as a transcription repressor of E2F target genes, whose activity is required for progress from the G1 to the S phase of the cell cycle. Hyperphosphorylation by CDKA-1 prevents the binding to E2F transcription factors, allowing G1 to S phase transition to operate. Forms a stable complex with E2FA that functions in maintaining cell proliferation through repression of cell differentiation. Plays a central role in the mechanism controlling meristem cell differentiation, cell fate establishment and cell fate maintenance during organogenesis and gametogenesis. Required during lateral organ production. Also involved in controlling asymmetric divisions of stem cells in different stem cell niches. Acts as a negative regulator of cell proliferation during leaf and gametophytes development. At later stages of development, restricts the progression through additional endocycles. In the leaf, plays a role in the control of the mesophyll differentiation. Another role is its implication in the regulation of imprinted genes. Acts together with MSI1 to repress the expression of MET1 during gametogenesis. This in turn activates expression of the imprinted genes FIS2 and FWA. Regulates many genes of the polycomb repressive complex 2 (PRC2). Plays an important role in meiosis affecting different aspects of this complex process. Functions as a positive regulator of the developmental switch from embryonic heterotrophic growth to autotrophic growth. Interaction with mastrevirus RepA or nanovirus Clink protein disrupts the RBR/E2F interaction and releases the transcription of replicative enzymes needed by the virus by increasing the E2F DNA-binding activity. The chain is Retinoblastoma-related protein 1 (RBR1) from Arabidopsis thaliana (Mouse-ear cress).